Consider the following 154-residue polypeptide: Large ribosomal subunit protein uL30 (154 aa).

This sequence belongs to the universal ribosomal protein uL30 family. In terms of assembly, part of the 50S ribosomal subunit.

The chain is Large ribosomal subunit protein uL30 from Methanocaldococcus jannaschii (strain ATCC 43067 / DSM 2661 / JAL-1 / JCM 10045 / NBRC 100440) (Methanococcus jannaschii).